The primary structure comprises 501 residues: Leukocyte receptor cluster member 9 (501 aa).

Disordered stretches follow at residues 1 to 43, 61 to 86, 203 to 234, and 281 to 300; these read MGSR…PAPP, RQPH…KPPL, GQEA…GELE, and QALG…WGPA. The segment at 40 to 67 adopts a C3H1-type zinc-finger fold; that stretch reads PAPPPACRFFLEGRCRFGARCRQPHPGA.

The chain is Leukocyte receptor cluster member 9 (LENG9) from Homo sapiens (Human).